The chain runs to 734 residues: Photosystem I P700 chlorophyll a apoprotein A2 (734 aa).

The next 8 helical transmembrane spans lie at 46–69, 135–158, 175–199, 273–291, 330–353, 369–395, 417–439, and 517–535; these read IFASHFGQLAIIFLWTSGNLFHVA, LYTGALFLLIVSAVALFAGWLHLQ, LNHHLSGLFGVSSLAWTGHLVHVAI, IAHHHLAIAVLFIIAGHMY, LHFQLGLALASLGVVTSLVAQHMY, AALYTHHQYIAGFIMTGAFAHGAIFFV, AIISHLSWASLFLGFHTLGLYVH, and FLVHHAIALGLHTTTLILV. [4Fe-4S] cluster contacts are provided by Cys559 and Cys568. 2 helical membrane-spanning segments follow: residues 575-596 and 643-665; these read AFYLAVFWMLNTIGWVTFYWHW and LSVWAWMFLFGHLVWATGFMFLI. Residues His654, Met662, and Tyr670 each coordinate chlorophyll a. Residue Trp671 participates in phylloquinone binding. Residues 707-727 traverse the membrane as a helical segment; sequence LVGLAHFSVGYVLTYAAFLIA.

This sequence belongs to the PsaA/PsaB family. As to quaternary structure, the PsaA/B heterodimer binds the P700 chlorophyll special pair and subsequent electron acceptors. PSI consists of a core antenna complex that captures photons, and an electron transfer chain that converts photonic excitation into a charge separation. The eukaryotic PSI reaction center is composed of at least 11 subunits. P700 is a chlorophyll a/chlorophyll a' dimer, A0 is one or more chlorophyll a, A1 is one or both phylloquinones and FX is a shared 4Fe-4S iron-sulfur center. serves as cofactor.

Its subcellular location is the plastid. The protein resides in the chloroplast thylakoid membrane. It carries out the reaction reduced [plastocyanin] + hnu + oxidized [2Fe-2S]-[ferredoxin] = oxidized [plastocyanin] + reduced [2Fe-2S]-[ferredoxin]. In terms of biological role, psaA and PsaB bind P700, the primary electron donor of photosystem I (PSI), as well as the electron acceptors A0, A1 and FX. PSI is a plastocyanin-ferredoxin oxidoreductase, converting photonic excitation into a charge separation, which transfers an electron from the donor P700 chlorophyll pair to the spectroscopically characterized acceptors A0, A1, FX, FA and FB in turn. Oxidized P700 is reduced on the lumenal side of the thylakoid membrane by plastocyanin. This is Photosystem I P700 chlorophyll a apoprotein A2 from Chlorokybus atmophyticus (Soil alga).